A 189-amino-acid chain; its full sequence is Imidazoleglycerol-phosphate dehydratase (189 aa).

This sequence belongs to the imidazoleglycerol-phosphate dehydratase family.

Its subcellular location is the cytoplasm. It catalyses the reaction D-erythro-1-(imidazol-4-yl)glycerol 3-phosphate = 3-(imidazol-4-yl)-2-oxopropyl phosphate + H2O. It functions in the pathway amino-acid biosynthesis; L-histidine biosynthesis; L-histidine from 5-phospho-alpha-D-ribose 1-diphosphate: step 6/9. This Nautilia profundicola (strain ATCC BAA-1463 / DSM 18972 / AmH) protein is Imidazoleglycerol-phosphate dehydratase.